Here is a 151-residue protein sequence, read N- to C-terminus: Small ribosomal subunit protein uS13 (151 aa).

Belongs to the universal ribosomal protein uS13 family. As to quaternary structure, part of the 30S ribosomal subunit. Forms a loose heterodimer with protein S19. Forms two bridges to the 50S subunit in the 70S ribosome.

Its function is as follows. Located at the top of the head of the 30S subunit, it contacts several helices of the 16S rRNA. In the 70S ribosome it contacts the 23S rRNA (bridge B1a) and protein L5 of the 50S subunit (bridge B1b), connecting the 2 subunits; these bridges are implicated in subunit movement. The polypeptide is Small ribosomal subunit protein uS13 (Staphylothermus marinus (strain ATCC 43588 / DSM 3639 / JCM 9404 / F1)).